The following is a 64-amino-acid chain: MYKQIFLCLIIAALCATIMAEASALADADDDDDKRYVRGMASKAGAIAGKIAKVALKALGRRDS.

The N-terminal stretch at 1 to 20 is a signal peptide; it reads MYKQIFLCLIIAALCATIMA. Positions 21–35 are excised as a propeptide; the sequence is EASALADADDDDDKR. The residue at position 59 (L59) is a Leucine amide. Residues 60–64 constitute a propeptide that is removed on maturation; sequence GRRDS.

This sequence belongs to the gastrin/cholecystokinin family. Magainin subfamily. Expressed by the skin glands. Synthesized in the stomach and stored in a novel granular multinucleated cell in the gastric mucosa. Stored as active, processed peptides in large granules within the granular gland secretions of the skin.

The protein localises to the secreted. In terms of biological role, PGLa and PGLa-H display a broad-spectrum of antibacterial activity against a range of Gram-positive and Gram-negative bacteria. PGLa also displays antifungal activity against C.albicans ATCC 14053. PGLa-H shows moderate antibacterial activity against the multidrug-resistant methicillin-resistant S.aureus (MRSA) but exhibits very little hemolytic activity. This is PYLa/PGLa B (pgla-b) from Xenopus laevis (African clawed frog).